A 149-amino-acid polypeptide reads, in one-letter code: 3-dehydroquinate dehydratase (149 aa).

Y26 (proton acceptor) is an active-site residue. Residues N77, H83, and D90 each coordinate substrate. Residue H103 is the Proton donor of the active site. Substrate is bound by residues 104–105 (LS) and R114.

The protein belongs to the type-II 3-dehydroquinase family. In terms of assembly, homododecamer.

The enzyme catalyses 3-dehydroquinate = 3-dehydroshikimate + H2O. It functions in the pathway metabolic intermediate biosynthesis; chorismate biosynthesis; chorismate from D-erythrose 4-phosphate and phosphoenolpyruvate: step 3/7. In terms of biological role, catalyzes a trans-dehydration via an enolate intermediate. The protein is 3-dehydroquinate dehydratase of Edwardsiella ictaluri (strain 93-146).